The sequence spans 313 residues: Porphobilinogen deaminase (313 aa).

C241 bears the S-(dipyrrolylmethanemethyl)cysteine mark.

Belongs to the HMBS family. In terms of assembly, monomer. The cofactor is dipyrromethane.

The catalysed reaction is 4 porphobilinogen + H2O = hydroxymethylbilane + 4 NH4(+). It participates in porphyrin-containing compound metabolism; protoporphyrin-IX biosynthesis; coproporphyrinogen-III from 5-aminolevulinate: step 2/4. It functions in the pathway porphyrin-containing compound metabolism; chlorophyll biosynthesis. Functionally, tetrapolymerization of the monopyrrole PBG into the hydroxymethylbilane pre-uroporphyrinogen in several discrete steps. The sequence is that of Porphobilinogen deaminase from Chlorobium phaeobacteroides (strain BS1).